Reading from the N-terminus, the 362-residue chain is Dihydroorotate dehydrogenase (quinone) (362 aa).

Residues 62–66 (AGYDK) and T86 each bind FMN. Residue K66 coordinates substrate. A substrate-binding site is contributed by 111–115 (NRLGF). N139 and N170 together coordinate FMN. N170 contributes to the substrate binding site. The active-site Nucleophile is the S173. N175 lines the substrate pocket. FMN contacts are provided by K215 and S243. 244–245 (NT) is a substrate binding site. Residues G266, G295, and 316–317 (YS) contribute to the FMN site.

Belongs to the dihydroorotate dehydrogenase family. Type 2 subfamily. As to quaternary structure, monomer. It depends on FMN as a cofactor.

Its subcellular location is the cell membrane. It catalyses the reaction (S)-dihydroorotate + a quinone = orotate + a quinol. It functions in the pathway pyrimidine metabolism; UMP biosynthesis via de novo pathway; orotate from (S)-dihydroorotate (quinone route): step 1/1. In terms of biological role, catalyzes the conversion of dihydroorotate to orotate with quinone as electron acceptor. The chain is Dihydroorotate dehydrogenase (quinone) from Rhizobium rhizogenes (strain K84 / ATCC BAA-868) (Agrobacterium radiobacter).